Consider the following 719-residue polypeptide: DNA replication licensing factor MCM7 (719 aa).

Ala-2 carries the N-acetylalanine modification. Residues Lys-15 and Lys-28 each participate in a glycyl lysine isopeptide (Lys-Gly) (interchain with G-Cter in SUMO2) cross-link. Ser-314 is subject to Phosphoserine. Residues 332–538 (FYEKLAASIA…NDLRLAQHIT (207 aa)) form the MCM domain. ATP is bound at residue Tyr-345. Ser-365 carries the phosphoserine modification. Gly-384, Ala-386, Lys-387, Ser-388, and Asn-489 together coordinate ATP. Position 500 is a phosphoserine (Ser-500). The Arginine finger motif lies at 513-516 (SRFD). ATP is bound at residue Arg-514. Positions 521–564 (IQDRPDRDNDLRLAQHITYVHQHSRQPPAQFEPLDMKLMRRYIA) are interaction with RAD17. The interval 577-719 (LADYITAAYV…NTSRTRITFV (143 aa)) is interaction with ATRIP. Arg-604 provides a ligand contact to ATP. Ser-678 is modified (phosphoserine).

It belongs to the MCM family. Component of the MCM2-7 complex. The complex forms a toroidal hexameric ring with the proposed subunit order MCM2-MCM6-MCM4-MCM7-MCM3-MCM5. Component of the CMG helicase complex, a hexameric ring of related MCM2-7 subunits stabilized by CDC45 and the tetrameric GINS complex. Interacts with the ATR-ATRIP complex and with RAD17. Interacts with TIPIN. Interacts with MCMBP. Interacts with ANKRD17. Component of the replisome complex composed of at least DONSON, MCM2, MCM7, PCNA and TICRR. In terms of processing, O-glycosylated (O-GlcNAcylated), in a cell cycle-dependent manner. Post-translationally, ubiquitinated by ECS(LRR1) E3 ubiquitin-protein ligase complex when forks converge following formation of DNA interstrand cross-links. During mitosis, ubiquitinated by TRAIP when forks converge following formation of DNA interstrand cross-links. Short ubiquitin chains on MCM7 promote recruitment of DNA glycosylase NEIL3. If the interstrand cross-link cannot be cleaved by NEIL3, the ubiquitin chains continue to grow on MCM7, promoting the unloading of the CMG helicase complex by the VCP/p97 ATPase.

Its subcellular location is the nucleus. The protein resides in the chromosome. It catalyses the reaction ATP + H2O = ADP + phosphate + H(+). Its function is as follows. Acts as a component of the MCM2-7 complex (MCM complex) which is the replicative helicase essential for 'once per cell cycle' DNA replication initiation and elongation in eukaryotic cells. Core component of CDC45-MCM-GINS (CMG) helicase, the molecular machine that unwinds template DNA during replication, and around which the replisome is built. The active ATPase sites in the MCM2-7 ring are formed through the interaction surfaces of two neighboring subunits such that a critical structure of a conserved arginine finger motif is provided in trans relative to the ATP-binding site of the Walker A box of the adjacent subunit. The six ATPase active sites, however, are likely to contribute differentially to the complex helicase activity. Uncomplexed form does not show ATPase or DNA helicase. Required for S-phase checkpoint activation upon UV-induced damage. This Mus musculus (Mouse) protein is DNA replication licensing factor MCM7 (Mcm7).